The sequence spans 400 residues: Queuine tRNA-ribosyltransferase catalytic subunit (400 aa).

Aspartate 89 serves as the catalytic Proton acceptor. Substrate is bound by residues 89–93 (DSGGF), aspartate 143, glutamine 185, and glycine 212. Residues 243–249 (GVGFPVD) form an RNA binding region. Catalysis depends on aspartate 262, which acts as the Nucleophile. An RNA binding; important for wobble base 34 recognition region spans residues 267-271 (TRTAR). Zn(2+)-binding residues include cysteine 301, cysteine 303, cysteine 306, and histidine 331.

The protein belongs to the queuine tRNA-ribosyltransferase family. In terms of assembly, heterodimer of a catalytic subunit and an accessory subunit. Zn(2+) serves as cofactor.

The protein localises to the cytoplasm. The enzyme catalyses guanosine(34) in tRNA + queuine = queuosine(34) in tRNA + guanine. Catalytic subunit of the queuine tRNA-ribosyltransferase (TGT) that catalyzes the base-exchange of a guanine (G) residue with queuine (Q) at position 34 (anticodon wobble position) in tRNAs with GU(N) anticodons (tRNA-Asp, -Asn, -His and -Tyr), resulting in the hypermodified nucleoside queuosine (7-(((4,5-cis-dihydroxy-2-cyclopenten-1-yl)amino)methyl)-7-deazaguanosine). Catalysis occurs through a double-displacement mechanism. The nucleophile active site attacks the C1' of nucleotide 34 to detach the guanine base from the RNA, forming a covalent enzyme-RNA intermediate. The proton acceptor active site deprotonates the incoming queuine, allowing a nucleophilic attack on the C1' of the ribose to form the product. This chain is Queuine tRNA-ribosyltransferase catalytic subunit, found in Caenorhabditis elegans.